The following is a 642-amino-acid chain: Threonine--tRNA ligase (642 aa).

A TGS domain is found at 1 to 61; it reads MPIITLPDGS…EQDSQLAIIT (61 aa). The interval 243–534 is catalytic; sequence DHRKIGKQLD…LTEEYAGFFP (292 aa). Positions 334, 385, and 511 each coordinate Zn(2+).

This sequence belongs to the class-II aminoacyl-tRNA synthetase family. Homodimer. Zn(2+) serves as cofactor.

Its subcellular location is the cytoplasm. The enzyme catalyses tRNA(Thr) + L-threonine + ATP = L-threonyl-tRNA(Thr) + AMP + diphosphate + H(+). Functionally, catalyzes the attachment of threonine to tRNA(Thr) in a two-step reaction: L-threonine is first activated by ATP to form Thr-AMP and then transferred to the acceptor end of tRNA(Thr). Also edits incorrectly charged L-seryl-tRNA(Thr). This is Threonine--tRNA ligase from Proteus mirabilis (strain HI4320).